We begin with the raw amino-acid sequence, 249 residues long: (2S)-[(R)-hydroxy(phenyl)methyl]succinyl-CoA dehydrogenase subunit BbsC (249 aa).

Belongs to the short-chain dehydrogenases/reductases (SDR) family. In terms of assembly, heterotetramer composed of 2 inactive BbsC subunits and 2 active BbsD subunits.

It participates in xenobiotic degradation; toluene degradation. Functionally, involved in an anaerobic toluene degradation pathway. Catalytically inactive subunit, which is probably required for the structural and/or regulatory integrity of the catalytic subunit BbsD. This subunit cannot bind NAD(+) or substrate. This Thauera aromatica protein is (2S)-[(R)-hydroxy(phenyl)methyl]succinyl-CoA dehydrogenase subunit BbsC.